A 629-amino-acid polypeptide reads, in one-letter code: tRNA uridine 5-carboxymethylaminomethyl modification enzyme MnmG (629 aa).

FAD contacts are provided by residues 14–19 (GAGHAG), valine 126, and serine 181. 273 to 287 (GPRYCPSIEDKVVRF) is a binding site for NAD(+). Glutamine 370 provides a ligand contact to FAD.

The protein belongs to the MnmG family. Homodimer. Heterotetramer of two MnmE and two MnmG subunits. The cofactor is FAD.

It localises to the cytoplasm. Its function is as follows. NAD-binding protein involved in the addition of a carboxymethylaminomethyl (cmnm) group at the wobble position (U34) of certain tRNAs, forming tRNA-cmnm(5)s(2)U34. This is tRNA uridine 5-carboxymethylaminomethyl modification enzyme MnmG from Bacillus cereus (strain ATCC 14579 / DSM 31 / CCUG 7414 / JCM 2152 / NBRC 15305 / NCIMB 9373 / NCTC 2599 / NRRL B-3711).